Reading from the N-terminus, the 368-residue chain is Seven-bladed beta-propeller protein MSMEG_5308 (368 aa).

In terms of assembly, interacts with MmpL3 and TtfA.

The protein resides in the cell septum. It is found in the cell tip. Its function is as follows. Stabilizes the MmpL3/TtfA trehalose monomycolate (TMM) transport complex under stress conditions. The protein is Seven-bladed beta-propeller protein MSMEG_5308 of Mycolicibacterium smegmatis (strain ATCC 700084 / mc(2)155) (Mycobacterium smegmatis).